The following is a 337-amino-acid chain: Gastrula zinc finger protein XlCGF26.1 (337 aa).

C2H2-type zinc fingers lie at residues 6–28 (FDCT…YKIH), 34–56 (FICA…SKIH), 62–84 (FPCT…NKIH), 90–112 (FICA…SKIH), 118–140 (FPCT…NKIH), 146–168 (FICA…SKIH), 174–196 (FPCT…NKIH), 202–224 (FTCT…VKIH), 230–252 (FTCT…NKIH), 258–280 (FTCT…FKIH), 286–309 (FSCT…KRTH), and 315–337 (FTCT…NKIH).

Belongs to the krueppel C2H2-type zinc-finger protein family.

It is found in the nucleus. In terms of biological role, may be involved in transcriptional regulation. This Xenopus laevis (African clawed frog) protein is Gastrula zinc finger protein XlCGF26.1.